Reading from the N-terminus, the 301-residue chain is Acetylglutamate kinase (301 aa).

Residues 68 to 69 (GG), arginine 90, and asparagine 195 each bind substrate.

This sequence belongs to the acetylglutamate kinase family. ArgB subfamily.

The protein resides in the cytoplasm. The catalysed reaction is N-acetyl-L-glutamate + ATP = N-acetyl-L-glutamyl 5-phosphate + ADP. It participates in amino-acid biosynthesis; L-arginine biosynthesis; N(2)-acetyl-L-ornithine from L-glutamate: step 2/4. In terms of biological role, catalyzes the ATP-dependent phosphorylation of N-acetyl-L-glutamate. The polypeptide is Acetylglutamate kinase (Pseudomonas savastanoi pv. phaseolicola (strain 1448A / Race 6) (Pseudomonas syringae pv. phaseolicola (strain 1448A / Race 6))).